A 371-amino-acid polypeptide reads, in one-letter code: MPHKDLPIRPLVRAFDPVGPDTLGPPDLDFASLFRERNVPEDAPLTLYPEQLNVPWHTSLPWTRQSKWWVQGEAAGRDLVNRISADKASERGALPVEFMDERRKGKIDELVEDAVSCAVYLYPSSSPTRIELLTQALLLLFFHDDVMERGATQDDATVCDDFVTMIPKNKHMKRYFAEVLECDPILGPGLLRAIGLFVNAGRKKSPFKQDKYATLAEYLDYRRHDIAKPFMIAAIRFGSGVRQTPEETAPFAELEDLYVQHSILINDLYSYDKEMYEARTINGSVVNAVHVIEKLMCVPPHLAKTITRTMSFDVEKKYYAESERFMRDPALNDKQRTYVIALFDCLTGNLFHHATLGRYSRYAEYVFDCKT.

Mg(2+)-binding residues include aspartate 144, asparagine 266, serine 270, and glutamate 274. Residues 144-148 (DDVME) carry the D(D/E)XX(D/E) motif motif. Residues 266 to 274 (NDLYSYDKE) carry the NSE motif motif. The WxxxxxRY motif signature appears at 352-359 (HHATLGRY). Positions 358 and 359 each coordinate (2E,6E)-farnesyl diphosphate.

Belongs to the terpene synthase family. In terms of assembly, homodimer. The cofactor is Mg(2+).

It carries out the reaction (2E,6E)-farnesyl diphosphate + H2O = (-)-alpha-acorenol + diphosphate. It participates in sesquiterpene biosynthesis. In terms of biological role, terpene cyclase that catalyzes the cyclization of farnesyl diphosphate (FPP) to the spirocyclic sesquiterpene alpha-acorenol. The polypeptide is Terpene cyclase 6 (Gibberella fujikuroi (strain CBS 195.34 / IMI 58289 / NRRL A-6831) (Bakanae and foot rot disease fungus)).